A 273-amino-acid polypeptide reads, in one-letter code: Large ribosomal subunit protein uL2cy (273 aa).

Disordered regions lie at residues 1–27 (MAIHLYKTSTPSTRNGAVDSQVKSNPR) and 224–273 (NPVD…RRRK).

It belongs to the universal ribosomal protein uL2 family. In terms of assembly, part of the 50S ribosomal subunit.

The protein resides in the plastid. Its subcellular location is the chloroplast. The chain is Large ribosomal subunit protein uL2cy (rpl2-B) from Liriodendron tulipifera (Tuliptree).